The primary structure comprises 469 residues: Argininosuccinate lyase (469 aa).

The protein belongs to the lyase 1 family. Argininosuccinate lyase subfamily.

It localises to the cytoplasm. The enzyme catalyses 2-(N(omega)-L-arginino)succinate = fumarate + L-arginine. It participates in amino-acid biosynthesis; L-arginine biosynthesis; L-arginine from L-ornithine and carbamoyl phosphate: step 3/3. This Cupriavidus metallidurans (strain ATCC 43123 / DSM 2839 / NBRC 102507 / CH34) (Ralstonia metallidurans) protein is Argininosuccinate lyase.